A 406-amino-acid polypeptide reads, in one-letter code: Serine hydroxymethyltransferase (406 aa).

(6S)-5,6,7,8-tetrahydrofolate contacts are provided by residues leucine 111 and 115–117 (GHL). Lysine 220 is subject to N6-(pyridoxal phosphate)lysine. Residue 340–342 (SAF) coordinates (6S)-5,6,7,8-tetrahydrofolate.

The protein belongs to the SHMT family. Homodimer. Pyridoxal 5'-phosphate serves as cofactor.

The protein resides in the cytoplasm. The catalysed reaction is (6R)-5,10-methylene-5,6,7,8-tetrahydrofolate + glycine + H2O = (6S)-5,6,7,8-tetrahydrofolate + L-serine. The protein operates within one-carbon metabolism; tetrahydrofolate interconversion. It functions in the pathway amino-acid biosynthesis; glycine biosynthesis; glycine from L-serine: step 1/1. Its function is as follows. Catalyzes the reversible interconversion of serine and glycine with tetrahydrofolate (THF) serving as the one-carbon carrier. This reaction serves as the major source of one-carbon groups required for the biosynthesis of purines, thymidylate, methionine, and other important biomolecules. Also exhibits THF-independent aldolase activity toward beta-hydroxyamino acids, producing glycine and aldehydes, via a retro-aldol mechanism. This chain is Serine hydroxymethyltransferase, found in Mycoplasma genitalium (strain ATCC 33530 / DSM 19775 / NCTC 10195 / G37) (Mycoplasmoides genitalium).